The following is a 216-amino-acid chain: Vesicle-associated membrane protein 7A (216 aa).

The Cytoplasmic segment spans residues 1 to 189 (MSQTDILYAC…KRKLWWQNKK (189 aa)). Residues 6–112 (ILYACVSYKG…ATYDPFIRVL (107 aa)) enclose the Longin domain. The 61-residue stretch at 126–186 (KMNLVMDQVS…VALKRKLWWQ (61 aa)) folds into the v-SNARE coiled-coil homology domain. The helical; Anchor for type IV membrane protein transmembrane segment at 190–210 (LAIAIGLVVCILIAVITLALL) threads the bilayer. The Vesicular portion of the chain corresponds to 211–216 (KYFKVI).

It belongs to the synaptobrevin family. Component of the SNARE complex composed of syn7A, syn8A, vamp7A and vti1A.

Its subcellular location is the cytoplasmic vesicle. The protein resides in the secretory vesicle membrane. It localises to the golgi apparatus. It is found in the trans-Golgi network membrane. The protein localises to the late endosome membrane. Its subcellular location is the lysosome membrane. The protein resides in the endoplasmic reticulum membrane. It localises to the phagosome membrane. In terms of biological role, involved in the targeting and/or fusion of transport vesicles to their target membrane during transport of proteins from the early endosome to the lysosome. Required for heterotypic fusion of late endosomes with lysosomes and homotypic lysosomal fusion. Required for calcium regulated lysosomal exocytosis. The sequence is that of Vesicle-associated membrane protein 7A from Dictyostelium discoideum (Social amoeba).